A 103-amino-acid polypeptide reads, in one-letter code: UPF0145 protein PERMA_0324 (103 aa).

It belongs to the UPF0145 family.

The polypeptide is UPF0145 protein PERMA_0324 (Persephonella marina (strain DSM 14350 / EX-H1)).